We begin with the raw amino-acid sequence, 235 residues long: Elongation factor Tu, chloroplastic (235 aa).

The 125-residue stretch at 1-125 (KNMITGAAQM…AVDSYIPTPE (125 aa)) folds into the tr-type G domain. Residue 47 to 50 (NKED) coordinates GTP.

The protein belongs to the TRAFAC class translation factor GTPase superfamily. Classic translation factor GTPase family. EF-Tu/EF-1A subfamily.

The protein localises to the plastid. It localises to the chloroplast. It carries out the reaction GTP + H2O = GDP + phosphate + H(+). GTP hydrolase that promotes the GTP-dependent binding of aminoacyl-tRNA to the A-site of ribosomes during protein biosynthesis. In Mantoniella squamata (Unicellular alga), this protein is Elongation factor Tu, chloroplastic (tufA).